The sequence spans 2085 residues: Protein MLP1 homolog (2085 aa).

6 coiled-coil regions span residues 44-367, 399-513, 568-630, 675-1205, 1232-1667, and 1744-1799; these read KIRE…SHDG, KATQ…HVLI, YELQ…RMKS, ANEA…KRTQ, LRRE…LQQE, and EIEA…AAKE. The interval 365–398 is disordered; the sequence is HDGVPGSVPQTPRANGSLLARPSSPFGTPASLRG. A disordered region spans residues 934-953; that stretch reads AERLRPLPTPRAPAAAEQPS. The short motif at 1159 to 1166 is the Nuclear localization signal element; it reads ERRQRLEQ. The segment covering 1482-1503 has biased composition (polar residues); it reads LATATEKNTSLQQQLAASSTEQ. Disordered stretches follow at residues 1482-1514 and 1567-1591; these read LATA…AAPS and SGGD…DEER. A compositionally biased stretch (low complexity) spans 1504 to 1514; it reads PAAAPVSAAPS. Polar residues predominate over residues 1574–1584; the sequence is AETSVSAQPSA. The segment at 1816-2085 is disordered; that stretch reads KPPAPAQAPA…GGGGGGGGNQ (270 aa). The segment covering 1817–1827 has biased composition (pro residues); the sequence is PPAPAQAPAPA. 3 stretches are compositionally biased toward low complexity: residues 1843–1858, 1910–1974, and 1982–1994; these read VAPA…QAPS, QAGQ…PVPA, and ARTA…AGPR. A compositionally biased stretch (gly residues) spans 1995-2016; sequence GARGGRGGGFVGAGRGAGGAAG. Residues 2028-2040 show a composition bias toward low complexity; that stretch reads GGATATAAAAAAA. Gly residues-rich tracts occupy residues 2041 to 2051 and 2076 to 2085; these read GGAGGSAGAGN and GGGGGGGGNQ.

As to quaternary structure, the nuclear pore complex (NPC) constitutes the exclusive means of nucleocytoplasmic transport. NPCs allow the passive diffusion of ions and small molecules and the active, nuclear transport receptor-mediated bidirectional transport of macromolecules such as proteins, RNAs, ribonucleoparticles (RNPs), and ribosomal subunits across the nuclear envelope. The 55-60 MDa NPC is composed of at least 28 different subunits: AMO1, ELYS, GLE1, GLE2, MLP1, NDC1, NIC96, NSP1, NUP133, NUP145, NUP152, NUP159, NUP170, NUP188, NUP192, NUP37, NUP49, NUP53, NUP56, NUP57, NUP82, NUP84, NUP85, POM152, POM33, POM34, SEC13 and SEH1. Due to its 8-fold rotational symmetry, all subunits are present with 8 copies or multiples thereof.

The protein localises to the nucleus. Involved in the structural and functional organization of perinuclear chromatin. Associates with the nuclear pore complex and form filamentous structures along the nuclear periphery. This is Protein MLP1 homolog (MLP1) from Chaetomium thermophilum (strain DSM 1495 / CBS 144.50 / IMI 039719) (Thermochaetoides thermophila).